A 276-amino-acid polypeptide reads, in one-letter code: Glutathione S-transferase-like protein ustS (276 aa).

The 94-residue stretch at 16–109 (STLPGTSKSW…HLDETYPDPP (94 aa)) folds into the GST N-terminal domain.

This sequence belongs to the GST superfamily.

The protein operates within mycotoxin biosynthesis. Functionally, glutathione S-transferase-like protein; part of the gene cluster that mediates the biosynthesis of the secondary metabolite ustiloxin B, an antimitotic tetrapeptide. First, ustA is processed by the subtilisin-like endoprotease Kex2 that is outside the ustiloxin B gene cluster, at the C-terminal side of Arg-Lys, after transfer to Golgi apparatus through the endoplasmic reticulum (ER). Cleavage by KEX2 generates 16 peptides YAIG-I to YAIG-XVI. To process the precursor peptide further, at least two peptidases are necessary to cleave the N-terminal and C-terminal sides of the Tyr-Ala-Ile-Gly core peptide which serves as backbone for the synthesis of ustiloxin B, through cyclization and modification of the tyrosine with a non-protein coding amino acid, norvaline. One of the two peptidases must be the serine peptidase ustP; and the other pepdidase is probably ustH. Macrocyclization of the core peptide derived from ustA requires the tyrosinase ustQ, as well as the homologous oxidases ustYa and ustYb, and leads to the production of the first cyclization product N-desmethylustiloxin F. For the formation of N-desmethylustiloxin F, three oxidation steps are required, hydroxylation at the benzylic position, hydroxylation at either the aromatic ring of Tyr or beta-position of Ile, and oxidative cyclization. UstQ may catalyze the oxidation of a phenol moiety, whereas the ustYa and ustYb are most likely responsible for the remaining two-step oxidations. N-desmethylustiloxin F is then methylated by ustM to yield ustiloxin F which in turn substrate of the cytochrome P450 monooxygenase ustC which catalyzes the formation of S-deoxyustiloxin H. The flavoprotein monooxygenases ustF1 and ustF2 then participate in the modification of the side chain of S-deoxyustiloxin H, leading to the synthesis of an oxime intermediate, via ustiloxin H. Finally, carboxylative dehydration performed by the cysteine desulfurase-like protein ustD yields ustiloxin B. This is Glutathione S-transferase-like protein ustS from Aspergillus flavus (strain ATCC 200026 / FGSC A1120 / IAM 13836 / NRRL 3357 / JCM 12722 / SRRC 167).